A 628-amino-acid polypeptide reads, in one-letter code: Translation factor GUF1, mitochondrial (628 aa).

The tr-type G domain maps to 27-209 (LPSRNFSIIA…AIISRIPPPS (183 aa)). GTP is bound by residues 36 to 43 (AHIDHGKS), 102 to 106 (DTPGH), and 156 to 159 (NKID).

It belongs to the TRAFAC class translation factor GTPase superfamily. Classic translation factor GTPase family. LepA subfamily.

The protein localises to the mitochondrion inner membrane. It carries out the reaction GTP + H2O = GDP + phosphate + H(+). Its function is as follows. Promotes mitochondrial protein synthesis. May act as a fidelity factor of the translation reaction, by catalyzing a one-codon backward translocation of tRNAs on improperly translocated ribosomes. Binds to mitochondrial ribosomes in a GTP-dependent manner. In Laccaria bicolor (strain S238N-H82 / ATCC MYA-4686) (Bicoloured deceiver), this protein is Translation factor GUF1, mitochondrial.